Here is a 568-residue protein sequence, read N- to C-terminus: Kelch-like protein 12 (568 aa).

The BTB domain occupies 33 to 100 (CDVTLRVEQK…VYTETVHVTV (68 aa)). Residues 135–236 (CLGIRDFAET…LTPRYITDVI (102 aa)) form the BACK domain. 6 Kelch repeats span residues 282-329 (VLLV…SLHD), 331-379 (IYVI…TLGD), 380-426 (MIYV…VASG), 427-473 (VIYC…LLND), 475-520 (IYVV…VLRG), and 522-567 (LYAI…VLRE). The segment at 405-568 (QWSMLGDMQT…DAGVCVLREK (164 aa)) is interaction with DVL3.

Component of the BCR(KLHL12) E3 ubiquitin ligase complex, at least composed of CUL3 and KLHL12 and RBX1. This complex interacts with DVL3 upon activation of the Wnt signaling pathway by WNT3A. Interacts with DRD4, KLHL2 and SEC31A. Interacts with PEF1 and PDCD6/ALG-2; interaction takes place in response to cytosolic calcium increase and leads to bridge together the BCR(KLHL12) complex and SEC31 (SEC31A or SEC31B). Ubiquitinated by the SCF(FBXL17) complex, leading to its degradation by the proteasome: ubiquitination by the SCF(FBXL17) complex takes place when aberrant BTB domain dimers are formed. Ubiquitously expressed. Highly expressed in testis and at lower levels in the submandibular salivary gland.

Its subcellular location is the cytoplasmic vesicle. The protein resides in the COPII-coated vesicle. It participates in protein modification; protein ubiquitination. Substrate-specific adapter of a BCR (BTB-CUL3-RBX1) E3 ubiquitin ligase complex that acts as a negative regulator of Wnt signaling pathway and ER-Golgi transport. The BCR(KLHL12) complex is involved in ER-Golgi transport by regulating the size of COPII coats, thereby playing a key role in collagen export, which is required for embryonic stem (ES) cells division: BCR(KLHL12) acts by mediating monoubiquitination of SEC31 (SEC31A or SEC31B). The BCR(KLHL12) complex is also involved in neural crest specification: in response to cytosolic calcium increase, interacts with the heterodimer formed with PEF1 and PDCD6/ALG-2, leading to bridge together the BCR(KLHL12) complex and SEC31 (SEC31A or SEC31B), promoting monoubiquitination of SEC31 and subsequent collagen export. As part of the BCR(KLHL12) complex, also acts as a negative regulator of the Wnt signaling pathway by mediating ubiquitination and subsequent proteolysis of DVL3. The BCR(KLHL12) complex also mediates polyubiquitination of DRD4 and PEF1, without leading to degradation of these proteins. The protein is Kelch-like protein 12 (KLHL12) of Homo sapiens (Human).